The following is a 381-amino-acid chain: Ubiquitin-associated protein 1-like (381 aa).

Residues L4–L50 form the UMA domain. Disordered regions lie at residues L87–R141 and S185–H228. Residues R95–R104 are compositionally biased toward basic and acidic residues. Acidic residues predominate over residues P105–P123. Low complexity predominate over residues A124–R141. The segment covering A197–P216 has biased composition (pro residues).

This chain is Ubiquitin-associated protein 1-like (UBAP1L), found in Homo sapiens (Human).